Here is a 237-residue protein sequence, read N- to C-terminus: Uridylate kinase (237 aa).

13-16 lines the ATP pocket; it reads KLSG. UMP is bound at residue Gly-53. Residues Gly-54 and Arg-58 each coordinate ATP. UMP is bound by residues Asp-73 and 134 to 141; that span reads AGLPYFST. The ATP site is built by Asn-162, Tyr-168, and Asp-171.

The protein belongs to the UMP kinase family. In terms of assembly, homohexamer.

The protein localises to the cytoplasm. The enzyme catalyses UMP + ATP = UDP + ADP. It participates in pyrimidine metabolism; CTP biosynthesis via de novo pathway; UDP from UMP (UMPK route): step 1/1. Its activity is regulated as follows. Inhibited by UTP. In terms of biological role, catalyzes the reversible phosphorylation of UMP to UDP. This chain is Uridylate kinase, found in Leifsonia xyli subsp. xyli (strain CTCB07).